A 287-amino-acid polypeptide reads, in one-letter code: METTKKLFALLCLFVTMNQAISVSDPDDMETFCMKSSRNTTSNTTYNKNLNTLLSTLSNQSSFANYYNLTTGLASDTVHGMFLCTGDVNRTTCNACVKNATIEIAKNCTNHREAIIYNVDCMVRYSDKFFLTTLETNPSYWWSSNDLIPKSFGKFGQRLSDKMGEVIVRSSLLSSSFTPYYLMDTTRFDNLYDLESIVQCTPDLDPRNCTTCLKLALQELTECCGNQVWAFIYTPNCMVSFDTYNSSLPPLPPPSRSGSFSHRGNNKLLGGMVLAVSVSVFAFLSLV.

Residues 1–20 (METTKKLFALLCLFVTMNQA) form the signal peptide. Topologically, residues 21–267 (ISVSDPDDME…GSFSHRGNNK (247 aa)) are extracellular. Gnk2-homologous domains lie at 28–130 (DMET…DKFF) and 135–246 (ETNP…TYNS). N-linked (GlcNAc...) asparagine glycosylation is found at Asn-39, Asn-43, Asn-59, Asn-68, Asn-89, Asn-99, Asn-107, Asn-208, and Asn-245. Residues 268–286 (LLGGMVLAVSVSVFAFLSL) traverse the membrane as a helical segment. A topological domain (cytoplasmic) is located at residue Val-287.

Belongs to the cysteine-rich repeat secretory protein family.

Its subcellular location is the membrane. This chain is Cysteine-rich repeat secretory protein 58 (CRRSP58), found in Arabidopsis thaliana (Mouse-ear cress).